We begin with the raw amino-acid sequence, 107 residues long: Metallothionein-1 (107 aa).

A propeptide spanning residues 1-2 is cleaved from the precursor; that stretch reads MD.

Belongs to the metallothionein superfamily. Type 7 family.

The metallothioneins are involved in the cellular sequestration of toxic metal ions. Binds 12 cadmium ions per molecule. This chain is Metallothionein-1, found in Tetrahymena pigmentosa.